We begin with the raw amino-acid sequence, 550 residues long: MKTKFIFITGGVLSSLGKGLSAASIGALLTSRGMTVTIQKLDPYINIDPGTMNPYQHGEVYVTDDGAEADLDLGHYERFLGTSLSQKNNSTSGAIYYKVISKERRGDYLGATVQVIPHITDEIKSTILSLAKSSIDNNTPDIAIIEIGGTIGDIEGLPFLEAIRQLQTDLGRQNCLYIHLTLVPYLGTAGEHKTKPTQHSVKELRSIGIQPNIILCRCEKPIPDDIKAKISLFCDVEKDAVFSAADINNIYELPLKFYTEGLDQKITSFLNLPTKQANLKPWEQLVNTINNPKGKVTITIVGKYVGLTEAYKSLHEALCHGGIANEITVDLQYVNSEIITEDNVNEIFKGVDGILVPGGFGSRGIEGKIESIRYARQKNIPFFGICLGMQCAVIEFARNVAGIEKANSEEFNPVAADKVIYLMKEWYDFRNNAIEYRDSLCDKGGTMRLGSYPCTLIKNTKAFKAYQTDSIEERHRHRYEFNNIYRDQFAEKGMIFSGTSPDNTLVEIIELLNHPWFIGCQFHPEFKSYPMKPHPLFKDFIHAACNHNKQ.

The tract at residues 1 to 272 (MKTKFIFITG…DQKITSFLNL (272 aa)) is amidoligase domain. Serine 14 contacts CTP. Residue serine 14 coordinates UTP. Residue 15-20 (SLGKGL) coordinates ATP. Tyrosine 55 contributes to the L-glutamine binding site. Aspartate 72 is an ATP binding site. Residues aspartate 72 and glutamate 146 each contribute to the Mg(2+) site. CTP-binding positions include 153-155 (DIE), 193-198 (KTKPTQ), and lysine 229. UTP contacts are provided by residues 193–198 (KTKPTQ) and lysine 229. The Glutamine amidotransferase type-1 domain occupies 297-550 (TITIVGKYVG…IHAACNHNKQ (254 aa)). Glycine 359 serves as a coordination point for L-glutamine. The active-site Nucleophile; for glutamine hydrolysis is cysteine 386. L-glutamine contacts are provided by residues 387–390 (LGMQ), glutamate 410, and arginine 478. Active-site residues include histidine 523 and glutamate 525.

It belongs to the CTP synthase family. As to quaternary structure, homotetramer.

The catalysed reaction is UTP + L-glutamine + ATP + H2O = CTP + L-glutamate + ADP + phosphate + 2 H(+). The enzyme catalyses L-glutamine + H2O = L-glutamate + NH4(+). It carries out the reaction UTP + NH4(+) + ATP = CTP + ADP + phosphate + 2 H(+). Its pathway is pyrimidine metabolism; CTP biosynthesis via de novo pathway; CTP from UDP: step 2/2. Its activity is regulated as follows. Allosterically activated by GTP, when glutamine is the substrate; GTP has no effect on the reaction when ammonia is the substrate. The allosteric effector GTP functions by stabilizing the protein conformation that binds the tetrahedral intermediate(s) formed during glutamine hydrolysis. Inhibited by the product CTP, via allosteric rather than competitive inhibition. Catalyzes the ATP-dependent amination of UTP to CTP with either L-glutamine or ammonia as the source of nitrogen. Regulates intracellular CTP levels through interactions with the four ribonucleotide triphosphates. The chain is CTP synthase from Lawsonia intracellularis (strain PHE/MN1-00).